The chain runs to 348 residues: Erythronate-4-phosphate dehydrogenase (348 aa).

Residues Thr46 and Thr67 each coordinate substrate. Asp147 lines the NAD(+) pocket. Arg209 is a catalytic residue. Asp233 is an NAD(+) binding site. Residue Glu238 is part of the active site. His255 serves as the catalytic Proton donor. An NAD(+)-binding site is contributed by Gly258. Tyr259 is a substrate binding site.

The protein belongs to the D-isomer specific 2-hydroxyacid dehydrogenase family. PdxB subfamily. In terms of assembly, homodimer.

The protein localises to the cytoplasm. The catalysed reaction is 4-phospho-D-erythronate + NAD(+) = (R)-3-hydroxy-2-oxo-4-phosphooxybutanoate + NADH + H(+). Its pathway is cofactor biosynthesis; pyridoxine 5'-phosphate biosynthesis; pyridoxine 5'-phosphate from D-erythrose 4-phosphate: step 2/5. In terms of biological role, catalyzes the oxidation of erythronate-4-phosphate to 3-hydroxy-2-oxo-4-phosphonooxybutanoate. This chain is Erythronate-4-phosphate dehydrogenase, found in Bacteroides thetaiotaomicron (strain ATCC 29148 / DSM 2079 / JCM 5827 / CCUG 10774 / NCTC 10582 / VPI-5482 / E50).